Here is a 252-residue protein sequence, read N- to C-terminus: F-box/SPRY domain-containing protein 1 (252 aa).

The 48-residue stretch at 1–48 folds into the F-box domain; it reads MVDPLCNYNVLEAIFSYLELNDLYRCSQVCKSWYHFLNDENSDVWRWH. In terms of domain architecture, B30.2/SPRY spans 58-250; that stretch reads VKSDLLASVS…VSMVYLGTPL (193 aa).

It belongs to the FBXO45/Fsn family. As to quaternary structure, component of an E3 ubiquitin ligase complex composed of hiw and Fsn.

It localises to the synapse. It participates in protein modification; protein ubiquitination. Required in the presynaptic motoneuron to down-regulate the levels of wnd and restrain synaptic terminal growth at the neuromuscular junction (NMJ). The protein is F-box/SPRY domain-containing protein 1 of Drosophila virilis (Fruit fly).